The sequence spans 339 residues: Phosphate acyltransferase (339 aa).

The protein belongs to the PlsX family. Homodimer. Probably interacts with PlsY.

It localises to the cytoplasm. The enzyme catalyses a fatty acyl-[ACP] + phosphate = an acyl phosphate + holo-[ACP]. Its pathway is lipid metabolism; phospholipid metabolism. Functionally, catalyzes the reversible formation of acyl-phosphate (acyl-PO(4)) from acyl-[acyl-carrier-protein] (acyl-ACP). This enzyme utilizes acyl-ACP as fatty acyl donor, but not acyl-CoA. The sequence is that of Phosphate acyltransferase from Pasteurella multocida (strain Pm70).